The primary structure comprises 308 residues: 34.2 kDa protein in rubredoxin operon (308 aa).

An intrachain disulfide couples cysteine 136 to cysteine 139. Position 268 to 278 (268 to 278) interacts with FAD; it reads TNIKGVFAAGD.

The protein belongs to the class-II pyridine nucleotide-disulfide oxidoreductase family.

The chain is 34.2 kDa protein in rubredoxin operon from Clostridium pasteurianum.